The primary structure comprises 400 residues: Elongation factor Tu (400 aa).

A tr-type G domain is found at 10–209 (KPHVNVGTIG…AVDSYIPTPE (200 aa)). The segment at 19 to 26 (GHVDHGKT) is G1. 19–26 (GHVDHGKT) lines the GTP pocket. A Mg(2+)-binding site is contributed by T26. Residues 60-64 (GITIS) form a G2 region. A G3 region spans residues 81–84 (DCPG). GTP-binding positions include 81-85 (DCPGH) and 136-139 (NKAD). A G4 region spans residues 136 to 139 (NKAD). The interval 174–176 (SGL) is G5.

This sequence belongs to the TRAFAC class translation factor GTPase superfamily. Classic translation factor GTPase family. EF-Tu/EF-1A subfamily. As to quaternary structure, monomer.

It localises to the cytoplasm. The enzyme catalyses GTP + H2O = GDP + phosphate + H(+). GTP hydrolase that promotes the GTP-dependent binding of aminoacyl-tRNA to the A-site of ribosomes during protein biosynthesis. This chain is Elongation factor Tu, found in Desulfitobacterium hafniense (strain DSM 10664 / DCB-2).